Here is a 348-residue protein sequence, read N- to C-terminus: Glycerol-1-phosphate dehydrogenase [NAD(P)+] (348 aa).

NAD(+)-binding positions include 94-98 (GKVID) and 116-119 (TTAS). Asp-121 is a substrate binding site. Ser-125 serves as a coordination point for NAD(+). Asp-168 is a substrate binding site. Zn(2+)-binding residues include Asp-168 and His-248. His-252 serves as a coordination point for substrate. Position 264 (His-264) interacts with Zn(2+).

This sequence belongs to the glycerol-1-phosphate dehydrogenase family. In terms of assembly, homooctamer. Zn(2+) is required as a cofactor.

The protein localises to the cytoplasm. It catalyses the reaction sn-glycerol 1-phosphate + NAD(+) = dihydroxyacetone phosphate + NADH + H(+). It carries out the reaction sn-glycerol 1-phosphate + NADP(+) = dihydroxyacetone phosphate + NADPH + H(+). Its pathway is membrane lipid metabolism; glycerophospholipid metabolism. Catalyzes the NAD(P)H-dependent reduction of dihydroxyacetonephosphate (DHAP or glycerone phosphate) to glycerol 1-phosphate (G1P). The G1P thus generated is used as the glycerophosphate backbone of phospholipids in the cellular membranes of Archaea. This is Glycerol-1-phosphate dehydrogenase [NAD(P)+] from Methanobrevibacter smithii (strain ATCC 35061 / DSM 861 / OCM 144 / PS).